The chain runs to 246 residues: Bis(5'-nucleosyl)-tetraphosphatase PrpE [asymmetrical] (246 aa).

It belongs to the PrpE family. Ni(2+) serves as cofactor.

The enzyme catalyses P(1),P(4)-bis(5'-guanosyl) tetraphosphate + H2O = GMP + GTP + 2 H(+). Its function is as follows. Asymmetrically hydrolyzes Ap4p to yield AMP and ATP. In Bacillus mycoides (strain KBAB4) (Bacillus weihenstephanensis), this protein is Bis(5'-nucleosyl)-tetraphosphatase PrpE [asymmetrical].